A 93-amino-acid polypeptide reads, in one-letter code: Phosphocarrier protein HPr (93 aa).

The HPr domain maps to 2–89 (AERRVNVGWA…KLVAEGLEEL (88 aa)). Histidine 15 serves as the catalytic Pros-phosphohistidine intermediate.

It belongs to the HPr family.

The protein localises to the cytoplasm. Its function is as follows. General (non sugar-specific) component of the phosphoenolpyruvate-dependent sugar phosphotransferase system (sugar PTS). This major carbohydrate active-transport system catalyzes the phosphorylation of incoming sugar substrates concomitantly with their translocation across the cell membrane. The phosphoryl group from phosphoenolpyruvate (PEP) is transferred to the phosphoryl carrier protein HPr by enzyme I. Phospho-HPr then transfers it to the PTS EIIA domain. This is Phosphocarrier protein HPr (ptsH) from Streptomyces coelicolor (strain ATCC BAA-471 / A3(2) / M145).